The sequence spans 141 residues: Hemoglobin subunit alpha (141 aa).

Positions Val1–Arg141 constitute a Globin domain. Residue Ser3 is modified to Phosphoserine. Position 7 is an N6-succinyllysine (Lys7). A Phosphothreonine modification is found at Thr8. At Lys11 the chain carries N6-succinyllysine. Lys16 carries the post-translational modification N6-acetyllysine; alternate. Lys16 bears the N6-succinyllysine; alternate mark. The residue at position 35 (Ser35) is a Phosphoserine. An N6-succinyllysine modification is found at Lys40. A Phosphoserine modification is found at Ser49. His58 contributes to the O2 binding site. A heme b-binding site is contributed by His87. Ser102 carries the post-translational modification Phosphoserine. At Thr108 the chain carries Phosphothreonine. A phosphoserine mark is found at Ser124 and Ser131. Thr134 and Thr137 each carry phosphothreonine. The residue at position 138 (Ser138) is a Phosphoserine.

Belongs to the globin family. In terms of assembly, heterotetramer of two alpha chains and two beta chains. Red blood cells.

In terms of biological role, involved in oxygen transport from the lung to the various peripheral tissues. This chain is Hemoglobin subunit alpha, found in Sciurus carolinensis (Eastern gray squirrel).